Consider the following 140-residue polypeptide: Large ribosomal subunit protein uL11 (140 aa).

It belongs to the universal ribosomal protein uL11 family. As to quaternary structure, part of the ribosomal stalk of the 50S ribosomal subunit. Interacts with L10 and the large rRNA to form the base of the stalk. L10 forms an elongated spine to which L12 dimers bind in a sequential fashion forming a multimeric L10(L12)X complex. One or more lysine residues are methylated.

Functionally, forms part of the ribosomal stalk which helps the ribosome interact with GTP-bound translation factors. This chain is Large ribosomal subunit protein uL11, found in Thermoanaerobacter pseudethanolicus (strain ATCC 33223 / 39E) (Clostridium thermohydrosulfuricum).